Reading from the N-terminus, the 224-residue chain is MSRISKAEMSRLLSVYFIMGSNNCTKDPLQILKDALEGGITIFQFREKGEGALTGEERICFAKELQAICKEYGVPFIVNDDVELALELDADGVHVGQEDEGITSVREKMGDKIIGVSTHTIEEARWAIENGADYLGVGPIFPTSTKKDTKAVQGTKGLAHFREQGITIPIVGIGGISIENTASVIEAGADGVSVISAISLAESAYESTKQLVEEVSKKGTSHKY.

Residues 44–48 (QFREK) and N79 contribute to the 4-amino-2-methyl-5-(diphosphooxymethyl)pyrimidine site. D80 and D99 together coordinate Mg(2+). S117 provides a ligand contact to 4-amino-2-methyl-5-(diphosphooxymethyl)pyrimidine. A 2-[(2R,5Z)-2-carboxy-4-methylthiazol-5(2H)-ylidene]ethyl phosphate-binding site is contributed by 143 to 145 (TST). K146 is a binding site for 4-amino-2-methyl-5-(diphosphooxymethyl)pyrimidine. 2-[(2R,5Z)-2-carboxy-4-methylthiazol-5(2H)-ylidene]ethyl phosphate is bound by residues G175 and 195 to 196 (IS).

Belongs to the thiamine-phosphate synthase family. Mg(2+) is required as a cofactor.

It catalyses the reaction 2-[(2R,5Z)-2-carboxy-4-methylthiazol-5(2H)-ylidene]ethyl phosphate + 4-amino-2-methyl-5-(diphosphooxymethyl)pyrimidine + 2 H(+) = thiamine phosphate + CO2 + diphosphate. The enzyme catalyses 2-(2-carboxy-4-methylthiazol-5-yl)ethyl phosphate + 4-amino-2-methyl-5-(diphosphooxymethyl)pyrimidine + 2 H(+) = thiamine phosphate + CO2 + diphosphate. The catalysed reaction is 4-methyl-5-(2-phosphooxyethyl)-thiazole + 4-amino-2-methyl-5-(diphosphooxymethyl)pyrimidine + H(+) = thiamine phosphate + diphosphate. It participates in cofactor biosynthesis; thiamine diphosphate biosynthesis; thiamine phosphate from 4-amino-2-methyl-5-diphosphomethylpyrimidine and 4-methyl-5-(2-phosphoethyl)-thiazole: step 1/1. Condenses 4-methyl-5-(beta-hydroxyethyl)thiazole monophosphate (THZ-P) and 2-methyl-4-amino-5-hydroxymethyl pyrimidine pyrophosphate (HMP-PP) to form thiamine monophosphate (TMP). The sequence is that of Thiamine-phosphate synthase from Bacillus cereus (strain ATCC 10987 / NRS 248).